Reading from the N-terminus, the 578-residue chain is Arginine--tRNA ligase (578 aa).

The 'HIGH' region motif lies at 122-132 (PNLAKEMHVGH).

Belongs to the class-I aminoacyl-tRNA synthetase family. As to quaternary structure, monomer.

The protein resides in the cytoplasm. It carries out the reaction tRNA(Arg) + L-arginine + ATP = L-arginyl-tRNA(Arg) + AMP + diphosphate. The sequence is that of Arginine--tRNA ligase from Pseudoalteromonas atlantica (strain T6c / ATCC BAA-1087).